Reading from the N-terminus, the 370-residue chain is Subtilisin-like protease (370 aa).

The signal sequence occupies residues 1-17; it reads MIASIVFFIVLVDGVAT. Active-site charge relay system residues include aspartate 13, histidine 35, and serine 190. The Peptidase S8 domain occupies 18–261; that stretch reads GSPNALVTDF…FGEVSPSRLE (244 aa). The P/Homo B domain occupies 240–370; that stretch reads RVTDRWTHRN…TTEGTCHGIR (131 aa).

It belongs to the peptidase S8 family.

The chain is Subtilisin-like protease (ORF47) from Ictalurid herpesvirus 1 (strain Auburn) (IcHV-1).